A 525-amino-acid chain; its full sequence is MSFNIKEISEMIEEQIRNYNKEIVQTEQGTVVSVGDGIALIYGLDNAIMGEFLKFPNNVYGMVLNLEESAVGAIILGDETLIREGDIVKRTNKVVETPVGDALLGRVINALSKPIDNLGPINFTKTRPIERVATSVMARRSVSQPLETGILAIDSAIPIGKGQRELIIGDRQTGKTAIAIDAIINQKNKNVKCIYVAIGQKDSTIVQVVEKLKKYGAMEYTVVVNAGASQPAPLQYLSPYVGVTIAEEWMENGNDVLIIYDDLSKHAVSYRQMSLLLRRPPGREAYPGDVFYLHSRLLERAARVNENYGGGSITALPIIETQAGDISAYIPTNVISITDGQIFLSSELFNQGVRPAVDIGSSVSRVGSAAQIKSIKQVSGTLKLELAQYYELELFAKFGSDLDEATKATLDQGAKIIQMLIQKQHNPLEQVDQAILLLTIKSHLIKWLPVESIYNFKHEILSHFKNDKHAFELRKKLDEQKTFDDQLQQQILKEAQKVVLKITKNINEYKPGTFGNISEYQNLGK.

169–176 serves as a coordination point for ATP; sequence GDRQTGKT.

The protein belongs to the ATPase alpha/beta chains family. F-type ATPases have 2 components, CF(1) - the catalytic core - and CF(0) - the membrane proton channel. CF(1) has five subunits: alpha(3), beta(3), gamma(1), delta(1), epsilon(1). CF(0) has three main subunits: a(1), b(2) and c(9-12). The alpha and beta chains form an alternating ring which encloses part of the gamma chain. CF(1) is attached to CF(0) by a central stalk formed by the gamma and epsilon chains, while a peripheral stalk is formed by the delta and b chains.

The protein localises to the cell membrane. The enzyme catalyses ATP + H2O + 4 H(+)(in) = ADP + phosphate + 5 H(+)(out). In terms of biological role, produces ATP from ADP in the presence of a proton gradient across the membrane. The alpha chain is a regulatory subunit. This chain is ATP synthase subunit alpha, found in Mycoplasma mycoides subsp. mycoides SC (strain CCUG 32753 / NCTC 10114 / PG1).